Reading from the N-terminus, the 549-residue chain is YTH domain-containing family protein 1 (549 aa).

Disordered stretches follow at residues Gln-29 to Met-102, Gly-139 to Gly-165, Gly-243 to Val-262, Asp-273 to Pro-298, and Arg-425 to Lys-458. Residues Val-49 to Gly-61 are compositionally biased toward polar residues. Over residues Gln-71–Met-102 the composition is skewed to low complexity. Polar residues-rich tracts occupy residues Thr-251–Gln-260 and Asp-273–Ala-289. Positions Asp-307–Phe-513 constitute a YTH domain.

Belongs to the YTHDF family. YTHDF1 subfamily.

Its function is as follows. Specifically recognizes and binds N6-methyladenosine (m6A)-containing mRNAs, and regulates their stability. M6A is a modification present at internal sites of mRNAs and some non-coding RNAs and plays a role in mRNA stability and processing. Directly interacts with the acid phosphatase APHA mRNA to increase its stability. This is YTH domain-containing family protein 1 from Cryphonectria parasitica (strain ATCC 38755 / EP155).